The following is a 313-amino-acid chain: ADP-L-glycero-D-manno-heptose-6-epimerase (313 aa).

NADP(+) contacts are provided by residues 10–11, 31–32, Lys38, Arg53, 75–79, and Asn92; these read MI, DN, and EGACS. Tyr139 (proton acceptor) is an active-site residue. Lys143 serves as a coordination point for NADP(+). A substrate-binding site is contributed by Asn174. Val175 and Lys183 together coordinate NADP(+). Lys183 acts as the Proton acceptor in catalysis. Substrate contacts are provided by residues Ser185, His192, 206–209, Arg214, and Tyr277; that span reads FAGS.

Belongs to the NAD(P)-dependent epimerase/dehydratase family. HldD subfamily. In terms of assembly, homopentamer. It depends on NADP(+) as a cofactor.

It catalyses the reaction ADP-D-glycero-beta-D-manno-heptose = ADP-L-glycero-beta-D-manno-heptose. Its pathway is nucleotide-sugar biosynthesis; ADP-L-glycero-beta-D-manno-heptose biosynthesis; ADP-L-glycero-beta-D-manno-heptose from D-glycero-beta-D-manno-heptose 7-phosphate: step 4/4. Its function is as follows. Catalyzes the interconversion between ADP-D-glycero-beta-D-manno-heptose and ADP-L-glycero-beta-D-manno-heptose via an epimerization at carbon 6 of the heptose. In Vibrio campbellii (strain ATCC BAA-1116), this protein is ADP-L-glycero-D-manno-heptose-6-epimerase.